The sequence spans 1046 residues: Piwi-like protein 2 (1046 aa).

Over residues 1–12 (MDPKRPTFPSPP) the composition is skewed to pro residues. Residues 1–35 (MDPKRPTFPSPPGVIRAPWQQSTEDQSQLLDQPSL) are disordered. The segment covering 19–31 (WQQSTEDQSQLLD) has biased composition (polar residues). A PAZ domain is found at 462–575 (SVLDVMNLIY…LLPELSFMTG (114 aa)). A Piwi domain is found at 741–1032 (LVVCIMTGNR…LAFLSGQYLH (292 aa)). Catalysis depends on residues Asp-818, Glu-856, Asp-888, and His-1021.

This sequence belongs to the argonaute family. Piwi subfamily. As to quaternary structure, component of the PET complex. Requires Mg(2+) as cofactor. Methylated on arginine residues; required for the interaction with Tudor domain-containing protein and subsequent localization to the meiotic nuage, also named P granule. In terms of tissue distribution, detected in primordial germ cells (PGCs) from 3 dpf. In adult, it is found in both the female and male gonad. In the ovary, it is present in all stages of germ cell differentiation. In testis, it is present in mitotic and meiotic germ cells. No protein has been detected in the fully differentiated sperm cell.

Its subcellular location is the cytoplasm. It localises to the nucleus. Functionally, endoribonuclease that plays a central role during spermatogenesis by repressing transposable elements and preventing their mobilization, which is essential for the germline integrity. Plays an essential role in germ cell differentiation and meiosis, independently of the function in transposable elements repression. Acts via the piRNA metabolic process, which mediates the repression of transposable elements during meiosis by forming complexes composed of piRNAs and Piwi proteins and govern the methylation and subsequent repression of transposons. During piRNA biosynthesis, plays a key role in the piRNA amplification loop, also named ping-pong amplification cycle, by acting as a 'slicer-competent' piRNA endoribonuclease that cleaves primary piRNAs, which are then loaded onto 'slicer-incompetent' piwil4. Piwil2 slicing produces a pre-miRNA intermediate, which is then processed in mature piRNAs, and as well as a 16 nucleotide by-product that is degraded. Required for piwil4/miwi2 nuclear localization and association with secondary piRNAs antisense. Represses circadian rhythms by promoting the stability and activity of core clock components BMAL1 and CLOCK. The chain is Piwi-like protein 2 (piwil2) from Danio rerio (Zebrafish).